The sequence spans 369 residues: Ubiquinone biosynthesis protein COQ4, mitochondrial (369 aa).

The transit peptide at 1-35 (MLTSQKVSRVLLHSSFLKTPVSTQSRSFVFTTIAT) directs the protein to the mitochondrion. The Zn(2+) site is built by histidine 212, aspartate 213, histidine 216, and glutamate 228. Residues 329–360 (AAAAATVTQRQRQQQRATATAANATSASSANV) are compositionally biased toward low complexity. Positions 329 to 369 (AAAAATVTQRQRQQQRATATAANATSASSANVKPSNTAGAM) are disordered.

It belongs to the COQ4 family. Component of a multi-subunit COQ enzyme complex, composed of at least COQ3, COQ4, COQ5, COQ6, COQ7 and COQ9. The cofactor is Zn(2+).

It is found in the mitochondrion inner membrane. The enzyme catalyses a 4-hydroxy-3-methoxy-5-(all-trans-polyprenyl)benzoate + H(+) = a 2-methoxy-6-(all-trans-polyprenyl)phenol + CO2. The protein operates within cofactor biosynthesis; ubiquinone biosynthesis. Its function is as follows. Lyase that catalyzes the C1-decarboxylation of 4-hydroxy-3-methoxy-5-(all-trans-polyprenyl)benzoic acid into 2-methoxy-6-(all-trans-polyprenyl)phenol during ubiquinone biosynthesis. In Lodderomyces elongisporus (strain ATCC 11503 / CBS 2605 / JCM 1781 / NBRC 1676 / NRRL YB-4239) (Yeast), this protein is Ubiquinone biosynthesis protein COQ4, mitochondrial.